A 138-amino-acid polypeptide reads, in one-letter code: Basic phospholipase A2 homolog Ts-K49b (138 aa).

A signal peptide spans 1-16 (MRTLWIMAVLLVGVEG). 6 disulfide bridges follow: C42/C131, C44/C60, C65/C138, C66/C104, C73/C97, and C91/C102. The tract at residues 121-133 (KKKKINLKLFCKK) is important for membrane-damaging activities in eukaryotes and bacteria; heparin-binding.

Expressed by the venom gland.

The protein localises to the secreted. Snake venom phospholipase A2 homolog that lacks catalytic activity. It shows myotoxic and weak anticoagulant activities. A model of myotoxic mechanism has been proposed: an apo Lys49-PLA2 is activated by the entrance of a hydrophobic molecule (e.g. fatty acid) at the hydrophobic channel of the protein leading to a reorientation of a monomer. This reorientation causes a transition between 'inactive' to 'active' states, causing alignment of C-terminal and membrane-docking sites (MDoS) side-by-side and putting the membrane-disruption sites (MDiS) in the same plane, exposed to solvent and in a symmetric position for both monomers. The MDoS region stabilizes the toxin on membrane by the interaction of charged residues with phospholipid head groups. Subsequently, the MDiS region destabilizes the membrane with penetration of hydrophobic residues. This insertion causes a disorganization of the membrane, allowing an uncontrolled influx of ions (i.e. calcium and sodium), and eventually triggering irreversible intracellular alterations and cell death. This is Basic phospholipase A2 homolog Ts-K49b from Trimeresurus stejnegeri (Chinese green tree viper).